Consider the following 239-residue polypeptide: Ubiquinone biosynthesis O-methyltransferase (239 aa).

4 residues coordinate S-adenosyl-L-methionine: arginine 44, glycine 63, aspartate 84, and methionine 128.

This sequence belongs to the methyltransferase superfamily. UbiG/COQ3 family.

It catalyses the reaction a 3-demethylubiquinol + S-adenosyl-L-methionine = a ubiquinol + S-adenosyl-L-homocysteine + H(+). The enzyme catalyses a 3-(all-trans-polyprenyl)benzene-1,2-diol + S-adenosyl-L-methionine = a 2-methoxy-6-(all-trans-polyprenyl)phenol + S-adenosyl-L-homocysteine + H(+). Its pathway is cofactor biosynthesis; ubiquinone biosynthesis. O-methyltransferase that catalyzes the 2 O-methylation steps in the ubiquinone biosynthetic pathway. The protein is Ubiquinone biosynthesis O-methyltransferase of Xanthomonas axonopodis pv. citri (strain 306).